The following is a 370-amino-acid chain: 3-dehydroquinate synthase (370 aa).

NAD(+)-binding positions include 112 to 116 (GVVGD), 136 to 137 (TS), lysine 149, lysine 158, and 176 to 179 (TLRT). Positions 191, 254, and 276 each coordinate Zn(2+).

This sequence belongs to the sugar phosphate cyclases superfamily. Dehydroquinate synthase family. Requires Co(2+) as cofactor. Zn(2+) is required as a cofactor. It depends on NAD(+) as a cofactor.

The protein localises to the cytoplasm. It catalyses the reaction 7-phospho-2-dehydro-3-deoxy-D-arabino-heptonate = 3-dehydroquinate + phosphate. It functions in the pathway metabolic intermediate biosynthesis; chorismate biosynthesis; chorismate from D-erythrose 4-phosphate and phosphoenolpyruvate: step 2/7. Functionally, catalyzes the conversion of 3-deoxy-D-arabino-heptulosonate 7-phosphate (DAHP) to dehydroquinate (DHQ). In Xanthomonas oryzae pv. oryzae (strain MAFF 311018), this protein is 3-dehydroquinate synthase.